The sequence spans 1653 residues: Protein strawberry notch (1653 aa).

Disordered regions lie at residues methionine 1–leucine 46, glycine 190–isoleucine 211, glycine 237–glycine 265, asparagine 317–asparagine 345, and serine 883–serine 1043. The span at aspartate 11–glutamine 36 shows a compositional bias: acidic residues. Phosphoserine is present on residues serine 24 and serine 26. A compositionally biased stretch (polar residues) spans alanine 194–serine 205. Residues serine 256–glycine 265 show a composition bias toward low complexity. Residues glycine 329–valine 342 are compositionally biased toward gly residues. The segment covering serine 883–alanine 901 has biased composition (low complexity). Phosphoserine occurs at positions 929 and 931. Acidic residues predominate over residues isoleucine 966–valine 975. Positions arginine 980–aspartate 998 are enriched in polar residues. Positions arginine 1008–lysine 1027 are enriched in basic residues. The stretch at leucine 1064–leucine 1125 forms a coiled coil.

This sequence belongs to the SBNO family. As to quaternary structure, interacts with vg for function in the wing disk. Interacts with Su(H) for function in the eye disk. At stage 8, when the formation of the midline precursor cells depends on Notch signaling, high level of expression is seen in the midline precursor cells and a lower level in the surrounding epidermal cells. Between stages 11 and 14, expression is uniform throughout the epidermis, and at stage 16, high level of expression is restricted to the central nervous system. Expressed in the larval leg, wing and eye imaginal disks. Expression is over the wing disk and accumulates within the pleural region.

The protein localises to the nucleus. In terms of biological role, notch pathway component, may contribute to the specificity between lateral and inductive Notch signaling pathways in the wing disk. Required during many developmental stages including oogenesis, embryogenesis and imaginal development of the eye, wing and leg. Ebi and sno regulate EGFR-dependent Delta transcription in the developing eye, by antagonizing a repressor function of Suppressor of Hairless (Su(H)). They are required in the R-cells for normal cone cell development. In Drosophila melanogaster (Fruit fly), this protein is Protein strawberry notch.